The primary structure comprises 209 residues: Ribosome maturation factor RimP (209 aa).

This sequence belongs to the RimP family.

The protein localises to the cytoplasm. Its function is as follows. Required for maturation of 30S ribosomal subunits. The sequence is that of Ribosome maturation factor RimP from Bartonella bacilliformis (strain ATCC 35685 / KC583 / Herrer 020/F12,63).